A 315-amino-acid chain; its full sequence is Mitochondrial glycine transporter (315 aa).

Solcar repeat units lie at residues 19–102 (SKTT…LRTG), 125–206 (TANL…LKRR), and 221–305 (KSSS…LILR). A run of 6 helical transmembrane segments spans residues 25–50 (FTAG…TRVQ), 77–103 (GTLP…RTGL), 128–153 (LATG…VRYE), 181–204 (GFGA…EQLK), 225–251 (INFV…KTRL), and 280–298 (GLGL…AWTV).

The protein belongs to the mitochondrial carrier (TC 2.A.29) family. SLC25A38 subfamily.

The protein localises to the mitochondrion inner membrane. The enzyme catalyses glycine(in) = glycine(out). Its function is as follows. Mitochondrial glycine transporter that imports glycine into the mitochondrial matrix. Plays an important role in providing glycine for the first enzymatic step in heme biosynthesis, the condensation of glycine with succinyl-CoA to produce 5-aminolevulinate (ALA) in the mitochondrial matrix. This chain is Mitochondrial glycine transporter, found in Aspergillus niger (strain ATCC MYA-4892 / CBS 513.88 / FGSC A1513).